The chain runs to 430 residues: Oleandomycin glycosyltransferase (430 aa).

Residues 385 to 430 form a disordered region; the sequence is GGTRRAADLIEAELPARHERQEPVGDRPNVGDRPAGVRSDRQRSAL. Over residues 386 to 409 the composition is skewed to basic and acidic residues; it reads GTRRAADLIEAELPARHERQEPVG.

This sequence belongs to the UDP-glycosyltransferase family.

Functionally, specifically inactivates oleandomycin via 2'-O-glycosylation using UDP-glucose. This is Oleandomycin glycosyltransferase (oleD) from Streptomyces antibioticus.